Reading from the N-terminus, the 201-residue chain is Regulator of G-protein signaling 1 (201 aa).

Residues S75–A191 enclose the RGS domain.

The protein resides in the cell membrane. It is found in the cytoplasm. Its subcellular location is the cytosol. Regulates G protein-coupled receptor signaling cascades, including signaling downstream of the N-formylpeptide chemoattractant receptors and leukotriene receptors. Inhibits B cell chemotaxis. Inhibits signal transduction by increasing the GTPase activity of G protein alpha subunits, thereby driving them into their inactive GDP-bound form. This chain is Regulator of G-protein signaling 1 (rgs1), found in Xenopus tropicalis (Western clawed frog).